Reading from the N-terminus, the 114-residue chain is UPF0342 protein SE_1526 (114 aa).

The protein belongs to the UPF0342 family.

The chain is UPF0342 protein SE_1526 from Staphylococcus epidermidis (strain ATCC 12228 / FDA PCI 1200).